A 781-amino-acid chain; its full sequence is MSIRRFVRLSLLIIALVSSLCESQKNFACDISAPATAKYGFCNVSLSYEARAKDLVSRLSLKEKVQQLVNKATGVPRLGVPPYEWWSEALHGVSDVGPGVHFNGTVPGATSFPATILTAASFNTSLWLKMGEVVSTEARAMHNVGLAGLTYWSPNVNVFRDPRWGRGQETPGEDPLVVSKYAVNYVKGLQDVHDAGKSRRLKVSSCCKHYTAYDLDNWKGIDRFHFDAKVTKQDLEDTYQTPFKSCVEEGDVSSVMCSYNRVNGIPTCADPNLLRGVIRGQWRLDGYIVSDCDSIQVYFNDIHYTKTREDAVALALKAGLNMNCGDFLGKYTENAVKLKKLNGSDVDEALIYNYIVLMRLGFFDGDPKSLPFGNLGPSDVCSKDHQMLALEAAKQGIVLLENRGDLPLPKTTVKKLAVIGPNANATKVMISNYAGVPCKYTSPIQGLQKYVPEKIVYEPGCKDVKCGDQTLISAAVKAVSEADVTVLVVGLDQTVEAEGLDRVNLTLPGYQEKLVRDVANAAKKTVVLVIMSAGPIDISFAKNLSTIRAVLWVGYPGEAGGDAIAQVIFGDYNPSGRLPETWYPQEFADKVAMTDMNMRPNSTSGFPGRSYRFYTGKPIYKFGYGLSYSSFSTFVLSAPSIIHIKTNPIMNLNKTTSVDISTVNCHDLKIRIVIGVKNHGLRSGSHVVLVFWKPPKCSKSLVGGGVPLTQLVGFERVEVGRSMTEKFTVDFDVCKALSLVDTHGKRKLVTGHHKLVIGSNSDQQIYHHLNVRLAGDSTVAI.

The first 23 residues, 1–23 (MSIRRFVRLSLLIIALVSSLCES), serve as a signal peptide directing secretion. Residues Asn-43, Asn-103, and Asn-123 are each glycosylated (N-linked (GlcNAc...) asparagine). Asp-291 is an active-site residue. 6 N-linked (GlcNAc...) asparagine glycosylation sites follow: Asn-342, Asn-424, Asn-504, Asn-543, Asn-601, and Asn-653.

This sequence belongs to the glycosyl hydrolase 3 family.

Its subcellular location is the secreted. The protein resides in the extracellular space. The protein localises to the extracellular matrix. This chain is Probable beta-D-xylosidase 5 (BXL5), found in Arabidopsis thaliana (Mouse-ear cress).